The chain runs to 762 residues: Dolichyl-phosphate-mannose--protein mannosyltransferase 4 (762 aa).

A compositionally biased stretch (basic residues) spans 1 to 10 (MSVPKKRNHG). The segment at 1-24 (MSVPKKRNHGKLPPSTKDVDDPSL) is disordered. Topologically, residues 1–53 (MSVPKKRNHGKLPPSTKDVDDPSLKYTKAAPKCEQVAEHWLLQPLPEPESRYS) are lumenal. Residues 54-74 (FWVTIVTLLAFAARFYKIWYP) traverse the membrane as a helical segment. Over 75–136 (KEVVFDEVHF…IGYSYETHPA (62 aa)) the chain is Cytoplasmic. The helical transmembrane segment at 137 to 157 (PYIAYRSFNAILGTLTVPIMF) threads the bilayer. At 158-166 (NTLKELNFR) the chain is on the lumenal side. A helical transmembrane segment spans residues 167–187 (AITCAFASLLVAIDTAHVTET). Residues 188–189 (RL) are Cytoplasmic-facing. A helical transmembrane segment spans residues 190-210 (ILLDAILIISIAATMYCYVRF). At 211–217 (YKCQLRQ) the chain is on the lumenal side. The chain crosses the membrane as a helical span at residues 218–238 (PFTWSWYIWLHATGLSLSFVI). Over 239–242 (STKY) the chain is Cytoplasmic. A helical transmembrane segment spans residues 243 to 263 (VGVMTYSAIGFAAVVNLWQLL). The Lumenal segment spans residues 264–283 (DIKAGLSLRQFMRHFSKRLN). The chain crosses the membrane as a helical span at residues 284-304 (GLVLIPFVIYLFWFWVHFTVL). Over 305 to 593 (NTSGPGDAFM…NGDEKKQIYF (289 aa)) the chain is Cytoplasmic. 3 consecutive MIR domains span residues 331-391 (SKTV…VLPP), 399-458 (GQAV…FQPL), and 464-521 (GHVL…VDEI). A helical membrane pass occupies residues 594–614 (IGNIIGWWFQVISLAVFVGII). At 615-635 (VADLITRHRGYYALNKMTREK) the chain is on the lumenal side. The chain crosses the membrane as a helical span at residues 636-656 (LYGPLMFFFVSWCCHYFPFFL). At 657–716 (MARQKFLHHYLPAHLIACLFSGALWEVIFSDCKSLDLEKDEDISGASYERNPKVYVKPYT) the chain is on the cytoplasmic side. Residues 717-737 (VFLVCVSCAVAWFFVYFSPLV) traverse the membrane as a helical segment. Residues 738 to 762 (YGDVSLSPSEVVSREWFDIELNFSK) lie on the Lumenal side of the membrane. Residue N759 is glycosylated (N-linked (GlcNAc...) asparagine).

This sequence belongs to the glycosyltransferase 39 family. Forms a functional homodimer and may form a heterodimer with PMT6. Interacts with RCR1.

The protein localises to the endoplasmic reticulum membrane. It carries out the reaction a di-trans,poly-cis-dolichyl beta-D-mannosyl phosphate + L-seryl-[protein] = 3-O-(alpha-D-mannosyl)-L-seryl-[protein] + a di-trans,poly-cis-dolichyl phosphate + H(+). The enzyme catalyses a di-trans,poly-cis-dolichyl beta-D-mannosyl phosphate + L-threonyl-[protein] = 3-O-(alpha-D-mannosyl)-L-threonyl-[protein] + a di-trans,poly-cis-dolichyl phosphate + H(+). The protein operates within protein modification; protein glycosylation. Protein O-mannosyltransferase involved in O-glycosylation which is essential for cell wall rigidity. Forms a homodimeric complex to transfer mannose from Dol-P-mannose to Ser or Thr residues on proteins. Specifically acts on secretory proteins with an ER-luminally oriented Ser/Thr-rich region flanked by a membrane anchor such as FUS1, AXL2, GAS1, KEX2, MID2, WSC1, WSC2, OPY2, PRM5, RAX2, or YNL176. The protein is Dolichyl-phosphate-mannose--protein mannosyltransferase 4 of Saccharomyces cerevisiae (strain ATCC 204508 / S288c) (Baker's yeast).